The chain runs to 213 residues: Outer-membrane lipoprotein LolB (213 aa).

A signal peptide spans 1-24 (MNNLSYFTKTKLVWVILSLSLLSA). Cys-25 carries the N-palmitoyl cysteine lipid modification. Residue Cys-25 is the site of S-diacylglycerol cysteine attachment.

It belongs to the LolB family. Monomer.

Its subcellular location is the cell outer membrane. Functionally, plays a critical role in the incorporation of lipoproteins in the outer membrane after they are released by the LolA protein. The sequence is that of Outer-membrane lipoprotein LolB from Shewanella woodyi (strain ATCC 51908 / MS32).